A 344-amino-acid polypeptide reads, in one-letter code: MAAREGRAPLARRAAIYGVVGLAAIAGVAMWSGAGPHRGTGAAGDAPDAAAVGGVAAAAPQAAVPASAGLPPSLAGSSAPRLPLDAGGHLAKSRAVRDFFDYCLTARSDLSAAALDALVVREIAAQLDGTVAQVEALDVWHRYRAYLDALATLRDAGAVDKSDLGALQLALDQRASIAYRTLGDWSQPFFGAEQWRQRYDLARLKITQDRSLTDAQKAERLAALQQQMPADERAAQQRVDRQRAAIDQIAQLQKSGATPDAMRAQLTQTLGPEAAARVAQMQQDDASWQSRYADYAAQRAQIESAGLSPQDRDAQIAALRQRVFTKPGEAVRAASLDRGAGSAH.

The chain crosses the membrane as a helical span at residues 14 to 34 (AAIYGVVGLAAIAGVAMWSGA).

This sequence belongs to the lipase chaperone family.

The protein resides in the cell inner membrane. Its function is as follows. May be involved in the folding of the extracellular lipase during its passage through the periplasm. In Burkholderia cenocepacia (strain HI2424), this protein is Lipase chaperone.